The sequence spans 184 residues: Ribose 1,5-bisphosphate phosphokinase PhnN (184 aa).

Position 11–18 (11–18) interacts with ATP; it reads GPSGAGKD.

This sequence belongs to the ribose 1,5-bisphosphokinase family.

It catalyses the reaction alpha-D-ribose 1,5-bisphosphate + ATP = 5-phospho-alpha-D-ribose 1-diphosphate + ADP. It participates in metabolic intermediate biosynthesis; 5-phospho-alpha-D-ribose 1-diphosphate biosynthesis; 5-phospho-alpha-D-ribose 1-diphosphate from D-ribose 5-phosphate (route II): step 3/3. In terms of biological role, catalyzes the phosphorylation of ribose 1,5-bisphosphate to 5-phospho-D-ribosyl alpha-1-diphosphate (PRPP). The sequence is that of Ribose 1,5-bisphosphate phosphokinase PhnN from Burkholderia mallei (strain SAVP1).